The sequence spans 480 residues: UDP-N-acetylmuramate--L-alanine ligase (480 aa).

An ATP-binding site is contributed by 129-135; it reads GTHGKTT.

This sequence belongs to the MurCDEF family.

The protein localises to the cytoplasm. It carries out the reaction UDP-N-acetyl-alpha-D-muramate + L-alanine + ATP = UDP-N-acetyl-alpha-D-muramoyl-L-alanine + ADP + phosphate + H(+). Its pathway is cell wall biogenesis; peptidoglycan biosynthesis. Its function is as follows. Cell wall formation. The polypeptide is UDP-N-acetylmuramate--L-alanine ligase (Mannheimia succiniciproducens (strain KCTC 0769BP / MBEL55E)).